The primary structure comprises 377 residues: Anhydro-N-acetylmuramic acid kinase (377 aa).

ATP is bound at residue 12 to 19 (GTSLDGID).

It belongs to the anhydro-N-acetylmuramic acid kinase family.

The catalysed reaction is 1,6-anhydro-N-acetyl-beta-muramate + ATP + H2O = N-acetyl-D-muramate 6-phosphate + ADP + H(+). It functions in the pathway amino-sugar metabolism; 1,6-anhydro-N-acetylmuramate degradation. It participates in cell wall biogenesis; peptidoglycan recycling. Its function is as follows. Catalyzes the specific phosphorylation of 1,6-anhydro-N-acetylmuramic acid (anhMurNAc) with the simultaneous cleavage of the 1,6-anhydro ring, generating MurNAc-6-P. Is required for the utilization of anhMurNAc either imported from the medium or derived from its own cell wall murein, and thus plays a role in cell wall recycling. The chain is Anhydro-N-acetylmuramic acid kinase from Methylorubrum extorquens (strain CM4 / NCIMB 13688) (Methylobacterium extorquens).